The following is a 598-amino-acid chain: Insulin-like growth factor 2 mRNA-binding protein 1 (598 aa).

RRM domains lie at 2 to 75 (NKLY…HSVP) and 81 to 156 (RKLQ…YIPD). A disordered region spans residues 155 to 195 (PDENSEVDSQRGPDNGRRPGYGPRGTSRQMSPGSGIPSKHQ). The span at 162–171 (DSQRGPDNGR) shows a compositional bias: basic and acidic residues. The residue at position 185 (Ser-185) is a Phosphoserine. 2 consecutive KH domains span residues 198–263 (DIPL…CRMI) and 279–346 (EVPL…EQEI). Tyr-399 carries the phosphotyrosine modification. 2 consecutive KH domains span residues 407 to 472 (QETV…QGRI) and 489 to 555 (KLET…QRKI). The tract at residues 561-598 (QVKQQQKGGGMGTPQGPHPQGMTELGSPQGLAQEPRRK) is disordered. Residues Thr-573 and Thr-583 each carry the phosphothreonine modification. Over residues 574–583 (PQGPHPQGMT) the composition is skewed to low complexity. Ser-587 is modified (phosphoserine).

The protein belongs to the RRM IMP/VICKZ family. Component of the CRD-mediated complex.

Its subcellular location is the nucleus. It localises to the cytoplasm. The protein resides in the perinuclear region. The protein localises to the P-body. It is found in the stress granule. Its subcellular location is the cell projection. It localises to the growth cone. The protein resides in the filopodium. The protein localises to the lamellipodium. RNA-binding factor that recruits target transcripts to cytoplasmic protein-RNA complexes (mRNPs). This transcript 'caging' into mRNPs allows mRNA transport and transient storage. It also modulates the rate and location at which target transcripts encounter the translational apparatus and shields them from endonuclease attacks or microRNA-mediated degradation. Preferentially binds to N6-methyladenosine (m6A)-containing mRNAs and increases their stability. Plays a direct role in the transport and translation of transcripts required for axonal regeneration in adult sensory neurons. Regulates localized beta-actin/ACTB mRNA translation in polarized cells, a crucial process for cell migration and neurite outgrowth. Promotes the directed movement of cells by fine-tuning intracellular signaling networks and enhances the velocity of cell migration. This Danio rerio (Zebrafish) protein is Insulin-like growth factor 2 mRNA-binding protein 1 (igf2bp1).